We begin with the raw amino-acid sequence, 245 residues long: Probable phosphatase NT01EI_1577 (245 aa).

Zn(2+)-binding residues include His7, His9, His15, His40, Glu73, His101, His131, Asp192, and His194.

Belongs to the PHP family. Homotrimer. It depends on Zn(2+) as a cofactor.

The sequence is that of Probable phosphatase NT01EI_1577 from Edwardsiella ictaluri (strain 93-146).